We begin with the raw amino-acid sequence, 341 residues long: KH domain-containing RNA-binding protein qki.S (341 aa).

A KH domain is found at 88–154 (YVPVKEYPDF…WEHLNEDLHV (67 aa)). The short motif at 324–330 (RVHPYQR) is the Nuclear localization signal element.

Belongs to the quaking family. Homodimer; does not require RNA to homodimerize.

Its subcellular location is the nucleus. The protein localises to the cytoplasm. Its function is as follows. RNA reader protein, which recognizes and binds specific RNAs, thereby regulating RNA metabolic processes, such as pre-mRNA splicing, circular RNA (circRNA) formation, mRNA export, mRNA stability and/or translation. Involved in various cellular processes, such as mRNA storage into stress granules, apoptosis, interferon response, glial cell fate and development. Binds to the 5'-NACUAAY-N(1,20)-UAAY-3' RNA core sequence. Acts as a mRNA modification reader that specifically recognizes and binds mRNA transcripts modified by internal N(7)-methylguanine (m7G). Promotes the formation of circular RNAs (circRNAs): acts by binding to sites flanking circRNA-forming exons. CircRNAs are produced by back-splicing circularization of pre-mRNAs. Required to protect and promote stability of mRNAs which promotes oligodendrocyte differentiation. Acts as an important regulator of muscle development. Essential for notochord development. The chain is KH domain-containing RNA-binding protein qki.S from Xenopus laevis (African clawed frog).